Here is a 92-residue protein sequence, read N- to C-terminus: UPF0223 protein SZO_10560 (92 aa).

This sequence belongs to the UPF0223 family.

The polypeptide is UPF0223 protein SZO_10560 (Streptococcus equi subsp. zooepidemicus (strain H70)).